Reading from the N-terminus, the 446-residue chain is ATP-dependent protease ATPase subunit HslU (446 aa).

ATP is bound by residues Val-17, 59–64 (GVGKTE), Asp-255, Glu-320, and Arg-392.

The protein belongs to the ClpX chaperone family. HslU subfamily. In terms of assembly, a double ring-shaped homohexamer of HslV is capped on each side by a ring-shaped HslU homohexamer. The assembly of the HslU/HslV complex is dependent on binding of ATP.

It is found in the cytoplasm. ATPase subunit of a proteasome-like degradation complex; this subunit has chaperone activity. The binding of ATP and its subsequent hydrolysis by HslU are essential for unfolding of protein substrates subsequently hydrolyzed by HslV. HslU recognizes the N-terminal part of its protein substrates and unfolds these before they are guided to HslV for hydrolysis. The sequence is that of ATP-dependent protease ATPase subunit HslU from Azotobacter vinelandii (strain DJ / ATCC BAA-1303).